The chain runs to 216 residues: Imidazole glycerol phosphate synthase subunit HisH (216 aa).

The region spanning 2 to 216 (SVAIVDYGSG…LISNFLKWKP (215 aa)) is the Glutamine amidotransferase type-1 domain. Cys-88 (nucleophile) is an active-site residue. Active-site residues include His-196 and Glu-198.

In terms of assembly, heterodimer of HisH and HisF.

The protein localises to the cytoplasm. The enzyme catalyses 5-[(5-phospho-1-deoxy-D-ribulos-1-ylimino)methylamino]-1-(5-phospho-beta-D-ribosyl)imidazole-4-carboxamide + L-glutamine = D-erythro-1-(imidazol-4-yl)glycerol 3-phosphate + 5-amino-1-(5-phospho-beta-D-ribosyl)imidazole-4-carboxamide + L-glutamate + H(+). It catalyses the reaction L-glutamine + H2O = L-glutamate + NH4(+). It participates in amino-acid biosynthesis; L-histidine biosynthesis; L-histidine from 5-phospho-alpha-D-ribose 1-diphosphate: step 5/9. Functionally, IGPS catalyzes the conversion of PRFAR and glutamine to IGP, AICAR and glutamate. The HisH subunit catalyzes the hydrolysis of glutamine to glutamate and ammonia as part of the synthesis of IGP and AICAR. The resulting ammonia molecule is channeled to the active site of HisF. This chain is Imidazole glycerol phosphate synthase subunit HisH, found in Rhodopseudomonas palustris (strain ATCC BAA-98 / CGA009).